A 265-amino-acid chain; its full sequence is Thiazole synthase (265 aa).

Residue lysine 106 is the Schiff-base intermediate with DXP of the active site. 1-deoxy-D-xylulose 5-phosphate-binding positions include glycine 167, 193 to 194 (AG), and 215 to 216 (NS).

Belongs to the ThiG family. In terms of assembly, homotetramer. Forms heterodimers with either ThiH or ThiS.

Its subcellular location is the cytoplasm. It carries out the reaction [ThiS sulfur-carrier protein]-C-terminal-Gly-aminoethanethioate + 2-iminoacetate + 1-deoxy-D-xylulose 5-phosphate = [ThiS sulfur-carrier protein]-C-terminal Gly-Gly + 2-[(2R,5Z)-2-carboxy-4-methylthiazol-5(2H)-ylidene]ethyl phosphate + 2 H2O + H(+). It functions in the pathway cofactor biosynthesis; thiamine diphosphate biosynthesis. Catalyzes the rearrangement of 1-deoxy-D-xylulose 5-phosphate (DXP) to produce the thiazole phosphate moiety of thiamine. Sulfur is provided by the thiocarboxylate moiety of the carrier protein ThiS. In vitro, sulfur can be provided by H(2)S. The sequence is that of Thiazole synthase from Prochlorococcus marinus subsp. pastoris (strain CCMP1986 / NIES-2087 / MED4).